We begin with the raw amino-acid sequence, 436 residues long: 3-ketoacyl-CoA thiolase (436 aa).

Residue Cys-99 is the Acyl-thioester intermediate of the active site. Catalysis depends on proton acceptor residues His-392 and Cys-422.

It belongs to the thiolase-like superfamily. Thiolase family. Heterotetramer of two alpha chains (FadJ) and two beta chains (FadI).

It is found in the cytoplasm. The catalysed reaction is an acyl-CoA + acetyl-CoA = a 3-oxoacyl-CoA + CoA. It participates in lipid metabolism; fatty acid beta-oxidation. Functionally, catalyzes the final step of fatty acid oxidation in which acetyl-CoA is released and the CoA ester of a fatty acid two carbons shorter is formed. The polypeptide is 3-ketoacyl-CoA thiolase (Escherichia coli (strain SMS-3-5 / SECEC)).